The chain runs to 435 residues: Probable exopolygalacturonase B (435 aa).

A signal peptide spans 1-15 (MKFFLATLFASAVSS). N-linked (GlcNAc...) asparagine glycans are attached at residues asparagine 59, asparagine 184, and asparagine 224. PbH1 repeat units follow at residues 208–239 (SKDVSFDDVYIHAFSTNKSALPKNSDGFDSLN), 240–261 (VDGLTVTNTRVDVGDDCFSPKP), 262–283 (NTTNIFVQNLLCNNTHGVSMGS), 294–315 (IEHAYIENVTLLNGQNGARLKA), and 326–347 (INNITYKNIRIENTDAPVVLDQ). Catalysis depends on aspartate 254, which acts as the Proton donor. The cysteines at positions 256 and 273 are disulfide-linked. N-linked (GlcNAc...) asparagine glycans are attached at residues asparagine 262 and asparagine 274. Histidine 277 is an active-site residue. Residues asparagine 301, asparagine 328, asparagine 365, and asparagine 373 are each glycosylated (N-linked (GlcNAc...) asparagine). The PbH1 6 repeat unit spans residues 366–388 (VTNILFENISGTSSGKNGKVVAD). A disulfide bridge connects residues cysteine 391 and cysteine 397. An N-linked (GlcNAc...) asparagine glycan is attached at asparagine 406.

This sequence belongs to the glycosyl hydrolase 28 family.

The protein localises to the secreted. It carries out the reaction [(1-&gt;4)-alpha-D-galacturonosyl](n) + H2O = alpha-D-galacturonate + [(1-&gt;4)-alpha-D-galacturonosyl](n-1). In terms of biological role, specific in hydrolyzing the terminal glycosidic bond of polygalacturonic acid and oligogalacturonates. This chain is Probable exopolygalacturonase B (pgxB), found in Aspergillus flavus (strain ATCC 200026 / FGSC A1120 / IAM 13836 / NRRL 3357 / JCM 12722 / SRRC 167).